The following is a 347-amino-acid chain: Protein-glutamate methylesterase/protein-glutamine glutaminase 4 (347 aa).

Residues 3–121 (KVLIVDDSAS…HPNHEREARS (119 aa)) enclose the Response regulatory domain. 4-aspartylphosphate is present on Asp-54. The region spanning 157 to 342 (PARLKAVAIG…PDRIVTALTS (186 aa)) is the CheB-type methylesterase domain. Active-site residues include Ser-168, His-195, and Asp-289.

This sequence belongs to the CheB family. In terms of processing, phosphorylated by CheA. Phosphorylation of the N-terminal regulatory domain activates the methylesterase activity.

It is found in the cytoplasm. The enzyme catalyses [protein]-L-glutamate 5-O-methyl ester + H2O = L-glutamyl-[protein] + methanol + H(+). It catalyses the reaction L-glutaminyl-[protein] + H2O = L-glutamyl-[protein] + NH4(+). In terms of biological role, involved in chemotaxis. Part of a chemotaxis signal transduction system that modulates chemotaxis in response to various stimuli. Catalyzes the demethylation of specific methylglutamate residues introduced into the chemoreceptors (methyl-accepting chemotaxis proteins or MCP) by CheR. Also mediates the irreversible deamidation of specific glutamine residues to glutamic acid. In Geobacter metallireducens (strain ATCC 53774 / DSM 7210 / GS-15), this protein is Protein-glutamate methylesterase/protein-glutamine glutaminase 4.